Consider the following 205-residue polypeptide: Protein DEPP1 (205 aa).

2 stretches are compositionally biased toward polar residues: residues 55–64 and 83–101; these read DKVTAQSRPN and GDSS…SPGT. A disordered region spans residues 55–171; sequence DKVTAQSRPN…RHQTSDLKSW (117 aa). A compositionally biased stretch (basic and acidic residues) spans 138–155; sequence MGKDTGRLCEARVPEHSL.

It is found in the cytoplasm. It localises to the peroxisome. The protein resides in the mitochondrion. Its function is as follows. Acts as a critical modulator of FOXO3-induced autophagy via increased cellular ROS. The protein is Protein DEPP1 (Depp1) of Mus musculus (Mouse).